The sequence spans 227 residues: Cytochrome c oxidase subunit 2 (227 aa).

Over 1 to 26 (MNTWMNFNLQNSNSPLMEQLMFFHNH) the chain is Mitochondrial intermembrane. Residues 27-48 (SMLIILLITILVGYIMSSLLYN) form a helical membrane-spanning segment. The Mitochondrial matrix portion of the chain corresponds to 49–62 (KLYNRYLLESQNVE). Residues 63–82 (IIWTILPAFMLIFIALPSLR) form a helical membrane-spanning segment. Over 83 to 227 (LLYLLDDSNS…SFIKWISSNS (145 aa)) the chain is Mitochondrial intermembrane. H161, C196, E198, C200, H204, and M207 together coordinate Cu cation. Residue E198 coordinates Mg(2+).

It belongs to the cytochrome c oxidase subunit 2 family. Component of the cytochrome c oxidase (complex IV, CIV), a multisubunit enzyme composed of a catalytic core of 3 subunits and several supernumerary subunits. The complex exists as a monomer or a dimer and forms supercomplexes (SCs) in the inner mitochondrial membrane with ubiquinol-cytochrome c oxidoreductase (cytochrome b-c1 complex, complex III, CIII). The cofactor is Cu cation.

It localises to the mitochondrion inner membrane. It carries out the reaction 4 Fe(II)-[cytochrome c] + O2 + 8 H(+)(in) = 4 Fe(III)-[cytochrome c] + 2 H2O + 4 H(+)(out). Component of the cytochrome c oxidase, the last enzyme in the mitochondrial electron transport chain which drives oxidative phosphorylation. The respiratory chain contains 3 multisubunit complexes succinate dehydrogenase (complex II, CII), ubiquinol-cytochrome c oxidoreductase (cytochrome b-c1 complex, complex III, CIII) and cytochrome c oxidase (complex IV, CIV), that cooperate to transfer electrons derived from NADH and succinate to molecular oxygen, creating an electrochemical gradient over the inner membrane that drives transmembrane transport and the ATP synthase. Cytochrome c oxidase is the component of the respiratory chain that catalyzes the reduction of oxygen to water. Electrons originating from reduced cytochrome c in the intermembrane space (IMS) are transferred via the dinuclear copper A center (CU(A)) of subunit 2 and heme A of subunit 1 to the active site in subunit 1, a binuclear center (BNC) formed by heme A3 and copper B (CU(B)). The BNC reduces molecular oxygen to 2 water molecules using 4 electrons from cytochrome c in the IMS and 4 protons from the mitochondrial matrix. The chain is Cytochrome c oxidase subunit 2 (COII) from Ctenocephalides felis (Cat flea).